Here is a 384-residue protein sequence, read N- to C-terminus: Guanine nucleotide-binding protein alpha-1 subunit (384 aa).

A lipid anchor (N-myristoyl glycine) is attached at Gly-2. Cys-5 carries S-palmitoyl cysteine lipidation. Positions 38 to 384 (HIQKLLLLGA…RRNLFEAGLL (347 aa)) constitute a G-alpha domain. The interval 41 to 54 (KLLLLGAGESGKST) is G1 motif. Glu-49, Ser-50, Gly-51, Lys-52, Ser-53, Thr-54, Leu-188, Tyr-189, Thr-194, Gly-222, Asn-288, Lys-289, Asp-291, and Ala-356 together coordinate GTP. Ser-53 serves as a coordination point for Mg(2+). Positions 186-194 (DVLYARVRT) are G2 motif. Position 194 (Thr-194) interacts with Mg(2+). The G3 motif stretch occupies residues 215-224 (YRLFDVGGQR). The G4 motif stretch occupies residues 284–291 (MLFLNKFD). The segment at 354 to 359 (TTALDQ) is G5 motif.

It belongs to the G-alpha family. G proteins are composed of 3 units; alpha, beta and gamma. The alpha chain contains the guanine nucleotide binding site. Requires Mg(2+) as cofactor.

In terms of biological role, guanine nucleotide-binding proteins (G proteins) are involved as modulators or transducers in various transmembrane signaling systems. This Lupinus luteus (European yellow lupine) protein is Guanine nucleotide-binding protein alpha-1 subunit (GPA1).